The chain runs to 391 residues: 8-amino-7-oxononanoate synthase (391 aa).

Arg19 contacts substrate. A pyridoxal 5'-phosphate-binding site is contributed by 106–107 (GY). Substrate is bound at residue His131. Pyridoxal 5'-phosphate-binding residues include Ser178, His206, and Thr234. Lys237 bears the N6-(pyridoxal phosphate)lysine mark. Thr353 serves as a coordination point for substrate.

This sequence belongs to the class-II pyridoxal-phosphate-dependent aminotransferase family. BioF subfamily. Homodimer. Pyridoxal 5'-phosphate is required as a cofactor.

The enzyme catalyses 6-carboxyhexanoyl-[ACP] + L-alanine + H(+) = (8S)-8-amino-7-oxononanoate + holo-[ACP] + CO2. It functions in the pathway cofactor biosynthesis; biotin biosynthesis. Catalyzes the decarboxylative condensation of pimeloyl-[acyl-carrier protein] and L-alanine to produce 8-amino-7-oxononanoate (AON), [acyl-carrier protein], and carbon dioxide. This Geobacter sulfurreducens (strain ATCC 51573 / DSM 12127 / PCA) protein is 8-amino-7-oxononanoate synthase.